A 245-amino-acid polypeptide reads, in one-letter code: CMRF35-like molecule 3 (245 aa).

An N-terminal signal peptide occupies residues 1-18; that stretch reads MWQFPALLFLFLPGCCTA. In terms of domain architecture, Ig-like V-type spans 19 to 124; that stretch reads QDPVTGPEEV…TDPMFKVNVN (106 aa). Topologically, residues 19–189 are extracellular; the sequence is QDPVTGPEEV…FIWSLLSSIS (171 aa). Cysteines 40 and 108 form a disulfide. Important for maintaining surface expression and for interaction with FCER1G stretches follow at residues 177 to 182 and 189 to 198; these read NSLFIW and SFLLMVFVVV. Residues 190–210 traverse the membrane as a helical segment; the sequence is FLLMVFVVVPLLLSMLSAVLW. Topologically, residues 211–245 are cytoplasmic; that stretch reads VNRPQRHYGGGEIGLVETHRSDALDGEKHFPGDEK.

This sequence belongs to the CD300 family. In terms of assembly, interacts with FCER1G; the interaction may be indirect. Interacts with TLR9. As to expression, highly expressed in bone marrow-derived mast cells and macrophages, peripheral blood monocytes and CD11c+ cells, with weaker expression detected in CD11b cells in bone marrow and peripheral blood. Not detected in B220+ cells in bone marrow or spleen, in Thy-1.2+ or CD3+ cells in peripheral blood, spleen or thymus, or in NK1.1+ cells in spleen (at protein level). Widely expressed in various tissues including heart, liver, spleen, lung, kidney, brain, bone marrow, thymus, axillary lymph node and mesenteric lymph node. Highly expressed in macrophage cell lines J774.1 and RAW 264.7 and in mast cell line MC/9. Weak expression detected in B-lineage cell lines WEHI-231 and A20 and in dendritic cell line DC2.4. Not detected in other myeloid cell lines or T-lineage cell lines.

The protein resides in the cell membrane. Its subcellular location is the early endosome. The protein localises to the lysosome. Its function is as follows. Acts as an activating receptor inducing cytokine production in mast cells. Can act as a positive regulator of TLR9 signaling in macrophages, leading to enhanced production of pro-inflammatory cytokines. The protein is CMRF35-like molecule 3 of Mus musculus (Mouse).